A 224-amino-acid polypeptide reads, in one-letter code: Aminopyrimidine aminohydrolase (224 aa).

Position 44 (Asp44) interacts with substrate. The Nucleophile role is filled by Cys135. Positions 139 and 165 each coordinate substrate. The active-site Proton donor is the Glu207.

The protein belongs to the TenA family. As to quaternary structure, homotetramer.

It catalyses the reaction 4-amino-5-aminomethyl-2-methylpyrimidine + H2O = 4-amino-5-hydroxymethyl-2-methylpyrimidine + NH4(+). The enzyme catalyses thiamine + H2O = 5-(2-hydroxyethyl)-4-methylthiazole + 4-amino-5-hydroxymethyl-2-methylpyrimidine + H(+). It participates in cofactor biosynthesis; thiamine diphosphate biosynthesis. Functionally, catalyzes an amino-pyrimidine hydrolysis reaction at the C5' of the pyrimidine moiety of thiamine compounds, a reaction that is part of a thiamine salvage pathway. Thus, catalyzes the conversion of 4-amino-5-aminomethyl-2-methylpyrimidine to 4-amino-5-hydroxymethyl-2-methylpyrimidine (HMP). To a lesser extent, is also able to catalyze the hydrolytic cleavage of thiamine; however, this thiaminase activity is unlikely to be physiologically relevant. Therefore, is involved in the regeneration of the thiamine pyrimidine from thiamine degraded products present in the environment, rather than in thiamine degradation. This Halalkalibacterium halodurans (strain ATCC BAA-125 / DSM 18197 / FERM 7344 / JCM 9153 / C-125) (Bacillus halodurans) protein is Aminopyrimidine aminohydrolase.